The following is a 362-amino-acid chain: MELGLSLGEAMADAGRELVLGLGMGRREEAAEAGRRDHEVRRELEFGSMSSRCGGSSPEPTVRLTLLPMVPGLGLPWPPPPPPSSESRHLEASTRGFDVNRPPSSGGGGGGGGAEEEQDDVAGAALSSSPNNSAGSFPMDDFSGHGLGGNDAAPGGGGGDRSCSRASDEDDGGSARKKLRLSKEQSAFLEESFKEHSTLNPKQKLALAKQLNLRPRQVEVWFQNRRARTKLKQTEVDCEYLKRCCETLTEENRRLQKELAELRALKTVHPFYMHLPATTLSMCPSCERVASNSAPATASSAATSSTAAPPAAPSSGGIAATSSSAAAAAAPDHRPSSFAALFSSPRGFPLSVAPQAQPPTSS.

Basic and acidic residues predominate over residues 27–45; the sequence is REEAAEAGRRDHEVRRELE. The segment at 27-179 is disordered; that stretch reads REEAAEAGRR…DDGGSARKKL (153 aa). Residues 64 to 75 show a composition bias toward low complexity; sequence LTLLPMVPGLGL. Residues 126-135 are compositionally biased toward polar residues; that stretch reads LSSSPNNSAG. Over residues 145 to 160 the composition is skewed to gly residues; the sequence is HGLGGNDAAPGGGGGD. The segment at residues 174-233 is a DNA-binding region (homeobox); it reads SARKKLRLSKEQSAFLEESFKEHSTLNPKQKLALAKQLNLRPRQVEVWFQNRRARTKLKQ. Positions 232-276 are leucine-zipper; sequence KQTEVDCEYLKRCCETLTEENRRLQKELAELRALKTVHPFYMHLP. The interval 301–330 is disordered; it reads AATSSTAAPPAAPSSGGIAATSSSAAAAAA.

Belongs to the HD-ZIP homeobox family. Class II subfamily. In terms of tissue distribution, expressed in stems, leaf sheaths and blades and panicles.

It is found in the nucleus. Probable transcription factor. The chain is Homeobox-leucine zipper protein HOX11 (HOX11) from Oryza sativa subsp. japonica (Rice).